We begin with the raw amino-acid sequence, 84 residues long: Putative membrane protein insertion efficiency factor (84 aa).

The interval 60 to 84 is disordered; that stretch reads WSQPGEDPVPDHFSLKRNDTRKQSH. Residues 68 to 84 show a composition bias toward basic and acidic residues; it reads VPDHFSLKRNDTRKQSH.

This sequence belongs to the UPF0161 family.

Its subcellular location is the cell membrane. Could be involved in insertion of integral membrane proteins into the membrane. This Streptococcus gordonii (strain Challis / ATCC 35105 / BCRC 15272 / CH1 / DL1 / V288) protein is Putative membrane protein insertion efficiency factor.